Consider the following 89-residue polypeptide: Small ribosomal subunit protein uS15 (89 aa).

Over residues 1 to 10 the composition is skewed to basic and acidic residues; the sequence is MPLNTEKKQE. The disordered stretch occupies residues 1-22; that stretch reads MPLNTEKKQELINSHQTHATDT. Over residues 11–22 the composition is skewed to polar residues; sequence LINSHQTHATDT.

This sequence belongs to the universal ribosomal protein uS15 family. In terms of assembly, part of the 30S ribosomal subunit. Forms a bridge to the 50S subunit in the 70S ribosome, contacting the 23S rRNA.

In terms of biological role, one of the primary rRNA binding proteins, it binds directly to 16S rRNA where it helps nucleate assembly of the platform of the 30S subunit by binding and bridging several RNA helices of the 16S rRNA. Functionally, forms an intersubunit bridge (bridge B4) with the 23S rRNA of the 50S subunit in the ribosome. The chain is Small ribosomal subunit protein uS15 from Synechococcus sp. (strain RCC307).